We begin with the raw amino-acid sequence, 456 residues long: Senecionine N-oxygenase (456 aa).

The signal sequence occupies residues 1-22 (MFRKFVIMLVLSLLVAAGISQA). 32 to 37 (GAGYSG) is a binding site for FAD. Residue 215-220 (GAGPSG) participates in NADP(+) binding.

Belongs to the FMO family. As to quaternary structure, homotetramer. Requires FAD as cofactor. In terms of tissue distribution, hemolymph.

It localises to the secreted. The enzyme catalyses senecionine + NADPH + O2 = senecionine N-oxide + NADP(+) + H2O. In terms of biological role, NADPH-dependent monooxygenase that detoxifies senecionine and similar plant alkaloids that are ingested by the larvae. Is active towards a narrow range of related substrates with highest activity towards senecionine, followed by seneciphylline, retrorsine, monocrotaline, senecivernine, axillarine and axillaridine. In Tyria jacobaeae (Cinnabar moth), this protein is Senecionine N-oxygenase (sno1).